Reading from the N-terminus, the 91-residue chain is UPF0250 protein BB0170 (91 aa).

This sequence belongs to the UPF0250 family.

This Bordetella bronchiseptica (strain ATCC BAA-588 / NCTC 13252 / RB50) (Alcaligenes bronchisepticus) protein is UPF0250 protein BB0170.